Consider the following 441-residue polypeptide: MSYFEHLPAVRYEGPQTDNPFAYRHYDKDKLVLGKRMEDHLRVAVCYWHTFVWPGADMFGPGTFERPWHHAGDALEMAHAKADHAFELFSKLGTPFYTFHDLDVAPEGDSIKSYVNNFKAMTDVLARKQEQTGIKLLWGTANLFSHPRYAAGAATNPNPDVFAFAATQVLNALEATQRLGGANYVLWGGREGYETLLNTDLKREREQLGRFMSMVVEHKHKTGFKGALLIEPKPQEPTKHQYDYDVATVHGFLTQFGLQDEIRVNIEANHATLAGHSFHHEIANAFALGIFGSVDANRGDAQNGWDTDQFPNSVEELTLAFYEILRNGGFTTGGMNFDAKVRRQSIDPEDIVHGHIGAIDVLAVALERAAHLIEHDRLAAFKQQRYAGWDSDFGRKILAGGYSLESLASDAVQRNIAPRHVSGQQERLENIVNQAIFSSAK.

Residues H100 and D103 contribute to the active site. E231, E267, H270, D295, D306, D308, and D338 together coordinate Mg(2+).

Belongs to the xylose isomerase family. Homotetramer. The cofactor is Mg(2+).

The protein resides in the cytoplasm. It catalyses the reaction alpha-D-xylose = alpha-D-xylulofuranose. The polypeptide is Xylose isomerase (Paraburkholderia phymatum (strain DSM 17167 / CIP 108236 / LMG 21445 / STM815) (Burkholderia phymatum)).